Here is a 290-residue protein sequence, read N- to C-terminus: Glycine--tRNA ligase alpha subunit (290 aa).

It belongs to the class-II aminoacyl-tRNA synthetase family. Tetramer of two alpha and two beta subunits.

Its subcellular location is the cytoplasm. It carries out the reaction tRNA(Gly) + glycine + ATP = glycyl-tRNA(Gly) + AMP + diphosphate. This chain is Glycine--tRNA ligase alpha subunit, found in Synechococcus sp. (strain CC9902).